A 126-amino-acid polypeptide reads, in one-letter code: Ribosome-binding factor A (126 aa).

Belongs to the RbfA family. In terms of assembly, monomer. Binds 30S ribosomal subunits, but not 50S ribosomal subunits or 70S ribosomes.

It is found in the cytoplasm. One of several proteins that assist in the late maturation steps of the functional core of the 30S ribosomal subunit. Associates with free 30S ribosomal subunits (but not with 30S subunits that are part of 70S ribosomes or polysomes). Required for efficient processing of 16S rRNA. May interact with the 5'-terminal helix region of 16S rRNA. The chain is Ribosome-binding factor A from Geobacillus sp. (strain WCH70).